A 599-amino-acid polypeptide reads, in one-letter code: Dehydrogenase eriK (599 aa).

An N-terminal signal peptide occupies residues 1–20 (MAFLKARLAALLSVAVSCSA). FAD is bound by residues 43–44 (TA) and 64–65 (EG). A glycan (N-linked (GlcNAc...) asparagine) is linked at N93. Position 122–125 (122–125 (NGMY)) interacts with FAD. Residues N169, N191, N234, N260, N284, N319, N339, N353, N365, N370, N398, N456, and N518 are each glycosylated (N-linked (GlcNAc...) asparagine). Residues A569 and 580–581 (TQ) contribute to the FAD site.

The protein belongs to the GMC oxidoreductase family. In terms of assembly, homodimer. It depends on FAD as a cofactor.

Functionally, dehydrogenase; part of the gene cluster that mediates the biosynthesis of erinacines, cyathane-xylosides that show unique biological activities, including leishmanicidal activity, stimulating activity for nerve growth-factor synthesis, and agonistic activity toward the kappa opioid receptor. The role of the dehydrogenase eriK within the pathway has still to be determined. The first step of the erinacines biosynthesis pathway is catalyzed by the geranylgeranyl diphosphate (GGPP) synthase eriE via conversion of farnesyl pyrophosphate and isopentyl pyrophosphate into geranylgeranyl pyrophosphate (GGPP). GGPP is then substrate of the diterpene cyclase eriG for the production of cyatha-3,12-diene. The cytochrome P450 monooxygenase eriI then hydroxylates cyatha-3,12-diene at C-14 of the seven-membered ring to produce erinacol, which is further hydroxylated at C-15 by the cytochrome P450 monooxygenase eriC to yield cyathadiol. The cytochrome P450 monooxygenase eriA then catalyzes C-11 hydroxylation in the presence of the short chain dehydrogenase/reductase (SDR) eriH, which leads to the production of cyathatriol. The acetyltransferase eriL converts cyathatriol into 11-O-acetyl-cyathatriol. The SDR eriH catalyzes further oxidation of 11-O-acetyl-cyathatriol into 1-O-acetylcyathin A3. Finally, the glycosyl transferase eriJ tranfers xylose from UDP-xylose onto C-14 of 11-O-acetyl-cyathatriol to form eracine Q. EriJ is also able to convert 11-O-acetyl-cyathatriol to eracine Q2 by using UDP-D-glucose as cosubstrate, but at a lower rate. The polypeptide is Dehydrogenase eriK (Hericium erinaceus (Lion's mane mushroom)).